The chain runs to 181 residues: Alkyl hydroperoxide reductase AhpD (181 aa).

C130 serves as the catalytic Proton donor. Residues C130 and C133 are joined by a disulfide bond. Catalysis depends on C133, which acts as the Cysteine sulfenic acid (-SOH) intermediate.

The protein belongs to the AhpD family.

The catalysed reaction is N(6)-[(R)-dihydrolipoyl]-L-lysyl-[lipoyl-carrier protein] + a hydroperoxide = N(6)-[(R)-lipoyl]-L-lysyl-[lipoyl-carrier protein] + an alcohol + H2O. In terms of biological role, antioxidant protein with alkyl hydroperoxidase activity. Required for the reduction of the AhpC active site cysteine residues and for the regeneration of the AhpC enzyme activity. This is Alkyl hydroperoxide reductase AhpD from Gluconacetobacter diazotrophicus (strain ATCC 49037 / DSM 5601 / CCUG 37298 / CIP 103539 / LMG 7603 / PAl5).